Reading from the N-terminus, the 372-residue chain is Dual-specificity RNA methyltransferase RlmN (372 aa).

The Proton acceptor role is filled by E94. In terms of domain architecture, Radical SAM core spans 100–339 (DGDRATLCVS…VTIRKTRGDD (240 aa)). C107 and C344 are disulfide-bonded. Residues C114, C118, and C121 each contribute to the [4Fe-4S] cluster site. S-adenosyl-L-methionine contacts are provided by residues 168-169 (GE), S200, 222-224 (SLH), and N301. C344 serves as the catalytic S-methylcysteine intermediate.

Belongs to the radical SAM superfamily. RlmN family. [4Fe-4S] cluster is required as a cofactor.

The protein localises to the cytoplasm. It carries out the reaction adenosine(2503) in 23S rRNA + 2 reduced [2Fe-2S]-[ferredoxin] + 2 S-adenosyl-L-methionine = 2-methyladenosine(2503) in 23S rRNA + 5'-deoxyadenosine + L-methionine + 2 oxidized [2Fe-2S]-[ferredoxin] + S-adenosyl-L-homocysteine. The enzyme catalyses adenosine(37) in tRNA + 2 reduced [2Fe-2S]-[ferredoxin] + 2 S-adenosyl-L-methionine = 2-methyladenosine(37) in tRNA + 5'-deoxyadenosine + L-methionine + 2 oxidized [2Fe-2S]-[ferredoxin] + S-adenosyl-L-homocysteine. In terms of biological role, specifically methylates position 2 of adenine 2503 in 23S rRNA and position 2 of adenine 37 in tRNAs. m2A2503 modification seems to play a crucial role in the proofreading step occurring at the peptidyl transferase center and thus would serve to optimize ribosomal fidelity. This Aliivibrio fischeri (strain ATCC 700601 / ES114) (Vibrio fischeri) protein is Dual-specificity RNA methyltransferase RlmN.